The chain runs to 273 residues: Oligodendrocyte transcription factor 3 (273 aa).

Over residues 1–14 (MNSDSSSVSSRASS) the composition is skewed to low complexity. The tract at residues 1–72 (MNSDSSSVSS…KAAGESSKYK (72 aa)) is disordered. Basic residues predominate over residues 24 to 34 (DHHHRHHHHHQ). A compositionally biased stretch (polar residues) spans 37–47 (RLNSVSSTQGD). Positions 69–90 (SKYKIKKQLSEQDLQQLRLKIN) form a coiled coil. The bHLH domain occupies 84–138 (QLRLKINGRERKRMHDLNLAMDGLREVMPYAHGPSVRKLSKIATLLLARNYILML).

In terms of tissue distribution, weakly expressed, mainly in non-neural tissues.

Its subcellular location is the nucleus. May determine the distinct specification program of class A neurons in the dorsal part of the spinal cord and suppress specification of class B neurons. The sequence is that of Oligodendrocyte transcription factor 3 (Olig3) from Mus musculus (Mouse).